Here is a 251-residue protein sequence, read N- to C-terminus: Hydroxyacylglutathione hydrolase (251 aa).

Residues histidine 53, histidine 55, aspartate 57, histidine 58, histidine 110, aspartate 127, and histidine 165 each contribute to the Zn(2+) site.

This sequence belongs to the metallo-beta-lactamase superfamily. Glyoxalase II family. As to quaternary structure, monomer. It depends on Zn(2+) as a cofactor.

It carries out the reaction an S-(2-hydroxyacyl)glutathione + H2O = a 2-hydroxy carboxylate + glutathione + H(+). The protein operates within secondary metabolite metabolism; methylglyoxal degradation; (R)-lactate from methylglyoxal: step 2/2. Thiolesterase that catalyzes the hydrolysis of S-D-lactoyl-glutathione to form glutathione and D-lactic acid. This Serratia proteamaculans (strain 568) protein is Hydroxyacylglutathione hydrolase.